We begin with the raw amino-acid sequence, 1679 residues long: MSNTTRSSRVTIGRIGTTPQITDPWSSGLEKQRPSRCGGPKSLAEPTYRKIGRRKMMLHMRVHDPGTTVTQRAKETATAKLNRIYLCTFNRMAQSCIYFVLFLVILSPNTSCALRSSAGETQNYVGILSNDSATTTYDVSSLHSSRRTNPPSSSSSSSSNVDVDYRNDRELHKVDLVGLGGERAGQAETISGGKYDYNYENTHTNASAKDEIVERQSNSLDFDGVDMFGAFSIPEEAIYTNEFAVNIPAGKQMADVIATKHGFINRGQIGSLDNYYLFQHHHVSKRSLRSSRKHQGALKSENEVKWMQQQHEKVRRKRDGPYQDLPTYSPYNLLRQHGGYVVDPNPHLSFSPESISLASHSQRMEYRDVSSHFIFPDPLFKEQWYLNGGAKDGLDMNVGPAWQKGYTGKGVVVSILDDGIQTNHPDLAQNYDPEASFDINGNDSDPTPQDNGDNKHGTRCAGEVAAVAFNNFCGVGVAYNASIGGVRMLDGKVNDVVEAQALSLNPSHIDIYSASWGPEDDGSTVDGPGPLARRAFIYGVTSGRQGKGSIFVWASGNGGRYTDSCNCDGYTNSIFTLSISSATQAGFKPWYLEECSSTLATTYSSGTPGHDKSVATVDMDGSLRPDHICTVEHTGTSASAPLAAGICALALEANPELTWRDMQYLVVYTSRPAPLEKENGWTLNGVKRKYSHKFGYGLMDAGAMVSLAEQWTSVPPQHICKSRENNEDRKIDGAYGSTLSTHMDVNGCAGTINEVRYLEHVQCRITLRFFPRGNLRILLTSPMGTTSTLLFERPRDIVKSNFDDWPFLSVHFWGEKAEGRWTLQVINGGRRRVNQPGILSKWQLIFYGTSTQPMRLKSELLNSSPQLRSPSSSNPFLFPSASNIGQPANEGGNFNTDSFASYLNYQNIFSSAGSDPEPATATLDGQNVTAAIAGGSSAESLGFTASAAQLVAAPETRDGDKKILHSCDAECDSSGCYGRGPTQCVACSHYRLDNTCVSRCPPRSFPNQVGICWPCHDTCETCAGAGPDSCLTCAPAHLHVIDLAVCLQFCPDGYFENSRNRTCVPCEPNCASCQDHPEYCTSCDHHLVMHEHKCYSACPLDTYETEDNKCAFCHSTCATCNGPTDQDCITCRSSRYAWQNKCLISCPDGFYADKKRLECMPCQEGCKTCTSNGVCSECLQNWTLNKRDKCIVSGSEGCSESEFYSQVEGQCRPCHASCGSCNGPADTSCTSCPPNRLLEQSRCVSGCREGFFVEAGSLCSPCLHTCSQCVSRTNCSNCSKGLELQNGECRTTCADGYYSDRGICAKCYLSCHTCSGPRRNQCVQCPAGWQLAAGECHPECPEGFYKSDFGCQKCHHYCKTCNDAGPLACTSCPPHSMLDGGLCMECLSSQYYDTTSATCKTCHDSCRSCFGPGQFSCKGCVPPLHLDQLNSQCVSCCQNQTLAEKTSSAACCNCDGETGECKATSTGGKRRTVVGSGSAYKSSESKHGSFENDGNAREFVLRLDSPLTAITAIAVAICLLIITIFSIIFAVLQRNSNHVSRNSVRYRKIANTSSGRRKNLSAKPTSDARFIFNIGEDDDTDGDNSDDELDGNVGTDINNRIVYDRKGNDHGHEFYIESTNDIDAIEFHCNGAGAQKAETQLQRCNANGDDDDILHYDRHTNAERKNHPSSTTSRTNIRS.

A compositionally biased stretch (polar residues) spans 1–10 (MSNTTRSSRV). The tract at residues 1–42 (MSNTTRSSRVTIGRIGTTPQITDPWSSGLEKQRPSRCGGPKS) is disordered. N-linked (GlcNAc...) asparagine glycans are attached at residues N3, N109, and N130. The tract at residues 139–164 (VSSLHSSRRTNPPSSSSSSSSNVDVD) is disordered. Over residues 147 to 160 (RTNPPSSSSSSSSN) the composition is skewed to low complexity. The N-linked (GlcNAc...) asparagine glycan is linked to N205. The region spanning 383–705 (QWYLNGGAKD…YGLMDAGAMV (323 aa)) is the Peptidase S8 domain. The Charge relay system role is filled by D417. A disordered region spans residues 424-456 (HPDLAQNYDPEASFDINGNDSDPTPQDNGDNKH). The span at 439 to 451 (INGNDSDPTPQDN) shows a compositional bias: polar residues. N-linked (GlcNAc...) asparagine glycosylation occurs at N442. H456 serves as the catalytic Charge relay system. Cystine bridges form between C473–C629 and C565–C595. N480 carries an N-linked (GlcNAc...) asparagine glycan. Catalysis depends on S637, which acts as the Charge relay system. Residues 714–852 (VPPQHICKSR…QLIFYGTSTQ (139 aa)) form the P/Homo B domain. A disulfide bridge connects residues C720 and C748. A glycan (N-linked (GlcNAc...) asparagine) is linked at N927. 10 FU repeats span residues 961 to 1006 (KKIL…RSFP), 1009 to 1056 (VGIC…GYFE), 1060 to 1104 (NRTC…DTYE), 1107 to 1152 (DNKC…GFYA), 1156 to 1204 (RLEC…SEFY), 1208 to 1253 (EGQC…GFFV), 1256 to 1299 (GSLC…GYYS), 1301 to 1346 (RGIC…GFYK), 1348 to 1393 (DFGC…QYYD), and 1396 to 1443 (SATC…QTLA). N1060 is a glycosylation site (N-linked (GlcNAc...) asparagine). The N-linked (GlcNAc...) asparagine glycan is linked to N1181. N-linked (GlcNAc...) asparagine glycosylation is found at N1274 and N1277. An N-linked (GlcNAc...) asparagine glycan is attached at N1439. The chain crosses the membrane as a helical span at residues 1512 to 1532 (AIAVAICLLIITIFSIIFAVL). Residues 1533 to 1679 (QRNSNHVSRN…STTSRTNIRS (147 aa)) are Cytoplasmic-facing. Residues 1660-1679 (TNAERKNHPSSTTSRTNIRS) are disordered. The span at 1668-1679 (PSSTTSRTNIRS) shows a compositional bias: polar residues.

This sequence belongs to the peptidase S8 family. Furin subfamily. The cofactor is Ca(2+). Transient expression in a subset of central nervous system neurons during embryonic stages 12-13. Expression in developing tracheal tree from stage 13 to end of embryonic development.

The protein localises to the membrane. The catalysed reaction is Release of mature proteins from their proproteins by cleavage of -Arg-Xaa-Yaa-Arg-|-Zaa- bonds, where Xaa can be any amino acid and Yaa is Arg or Lys. Releases albumin, complement component C3 and von Willebrand factor from their respective precursors.. Furin is likely to represent the ubiquitous endoprotease activity within constitutive secretory pathways and capable of cleavage at the RX(K/R)R consensus motif. The polypeptide is Furin-like protease 2 (Fur2) (Drosophila melanogaster (Fruit fly)).